Reading from the N-terminus, the 154-residue chain is Myoglobin (154 aa).

The region spanning 2–148 (GLSDGEWQLV…FRKDIAAKYK (147 aa)) is the Globin domain. S4 bears the Phosphoserine mark. A nitrite-binding site is contributed by H65. Residue H65 coordinates O2. T68 carries the post-translational modification Phosphothreonine. H94 provides a ligand contact to heme b.

This sequence belongs to the globin family. In terms of assembly, monomeric.

It is found in the cytoplasm. The protein localises to the sarcoplasm. The catalysed reaction is Fe(III)-heme b-[protein] + nitric oxide + H2O = Fe(II)-heme b-[protein] + nitrite + 2 H(+). The enzyme catalyses H2O2 + AH2 = A + 2 H2O. In terms of biological role, monomeric heme protein which primary function is to store oxygen and facilitate its diffusion within muscle tissues. Reversibly binds oxygen through a pentacoordinated heme iron and enables its timely and efficient release as needed during periods of heightened demand. Depending on the oxidative conditions of tissues and cells, and in addition to its ability to bind oxygen, it also has a nitrite reductase activity whereby it regulates the production of bioactive nitric oxide. Under stress conditions, like hypoxia and anoxia, it also protects cells against reactive oxygen species thanks to its pseudoperoxidase activity. In Globicephala melas (Long-finned pilot whale), this protein is Myoglobin (MB).